A 637-amino-acid polypeptide reads, in one-letter code: Early transcription factor 70 kDa subunit (637 aa).

The protein belongs to the helicase family. VETF subfamily. In terms of assembly, heterodimer of a 70 kDa and a 82 kDa subunit. Part of the early transcription complex composed of ETF, RAP94/OPG109, and the DNA-directed RNA polymerase. Post-translationally, apparently non-glycosylated.

The protein localises to the virion. Acts with RNA polymerase to initiate transcription from early gene promoters. Is recruited by the RPO-associated protein of 94 kDa RAP94/OPG109 to form the early transcription complex, which also contains the core RNA polymerase. ETF heterodimer binds to early gene promoters. In Monkeypox virus, this protein is Early transcription factor 70 kDa subunit (OPG118).